We begin with the raw amino-acid sequence, 27 residues long: Urumin (27 aa).

As to expression, expressed by the skin glands.

Its subcellular location is the secreted. Amphibian peptide that shows viricidal activity against human H1N1 influenza A virus. It specifically targets the conserved stalk region of H1 hemagglutinin, and acts by actively destroying influenza virions. It shows a reduced activity on human H3N2 influenza A virus and no activity against other viruses (HIV, SIV, HSV-II, hepatitis C, Ebola, Zika, and Dengue viruses). In vivo, the peptide also protects mice infected with mouse-adapted influenza virus from lethal influenza infection. The peptide synthesized in D-amino acids is inactive. This is Urumin from Hydrophylax bahuvistara (Wide-spread fungoid frog).